We begin with the raw amino-acid sequence, 179 residues long: Coiled-coil domain-containing protein 32 (179 aa).

The stretch at 75–98 forms a coiled coil; the sequence is EVYLASLEKKLRRIKGLNEEVTSK. The interval 157–179 is disordered; sequence FLIPPESQAEKPEARDEPAAAEQ. Basic and acidic residues predominate over residues 164 to 179; sequence QAEKPEARDEPAAAEQ.

Interacts with AP2S1; the interaction is direct and mediates association with adaptor protein complex 2 (AP-2).

Its subcellular location is the membrane. The protein localises to the coated pit. Its function is as follows. Regulates clathrin-mediated endocytsois of cargos such as transferrin probably through the association and modulation of adaptor protein complex 2 (AP-2). Has a role in ciliogenesis. Required for proper cephalic and left/right axis development. The sequence is that of Coiled-coil domain-containing protein 32 (Ccdc32) from Rattus norvegicus (Rat).